A 207-amino-acid polypeptide reads, in one-letter code: Small ribosomal subunit protein uS4 (207 aa).

Positions 31-54 (KCKLDSKPGQHGRTSGARTSDYGN) are disordered. A compositionally biased stretch (polar residues) spans 42-53 (GRTSGARTSDYG). Residues 97-160 (SRLDNVVYRM…KKQVRIAEAL (64 aa)) enclose the S4 RNA-binding domain.

The protein belongs to the universal ribosomal protein uS4 family. Part of the 30S ribosomal subunit. Contacts protein S5. The interaction surface between S4 and S5 is involved in control of translational fidelity.

One of the primary rRNA binding proteins, it binds directly to 16S rRNA where it nucleates assembly of the body of the 30S subunit. Its function is as follows. With S5 and S12 plays an important role in translational accuracy. This Cupriavidus metallidurans (strain ATCC 43123 / DSM 2839 / NBRC 102507 / CH34) (Ralstonia metallidurans) protein is Small ribosomal subunit protein uS4.